The chain runs to 718 residues: Acetolactate synthase, mitochondrial (718 aa).

Disordered regions lie at residues 1-53 and 75-99; these read MLTR…YDTP and QSSA…QAAP. A compositionally biased stretch (polar residues) spans 32–45; the sequence is RYSNNIHTSSTQNA. Residues 76-99 are compositionally biased toward low complexity; that stretch reads SSASTAAASPAVRPQPAQHFQAAP. E173 provides a ligand contact to thiamine diphosphate. Residue R275 participates in FAD binding. A disordered region spans residues 301-326; it reads VQPGHSPYLPSNPLNPSSQPSDPLPG. Over residues 306–325 the composition is skewed to low complexity; sequence SPYLPSNPLNPSSQPSDPLP. Residues 397–418 and 449–468 contribute to the FAD site; these read HGSA…LGVR and EIQP…VLGD. Positions 541–621 are thiamine pyrophosphate binding; the sequence is QHQMWACQYY…VKVLLFNNEF (81 aa). Positions 592 and 619 each coordinate Mg(2+).

This sequence belongs to the TPP enzyme family. It depends on Mg(2+) as a cofactor. Requires thiamine diphosphate as cofactor.

The protein resides in the mitochondrion. It catalyses the reaction 2 pyruvate + H(+) = (2S)-2-acetolactate + CO2. The protein operates within amino-acid biosynthesis; L-isoleucine biosynthesis; L-isoleucine from 2-oxobutanoate: step 1/4. Its pathway is amino-acid biosynthesis; L-valine biosynthesis; L-valine from pyruvate: step 1/4. This chain is Acetolactate synthase, mitochondrial (ILV2), found in Cryptococcus neoformans var. grubii serotype A (strain H99 / ATCC 208821 / CBS 10515 / FGSC 9487) (Filobasidiella neoformans var. grubii).